The sequence spans 129 residues: MGKAKFPRQLKDNEAKAVARTIRVSPQKLNLVAAMIRGKKVGAALADLTFSRKRIAGTVKKTLESAVANAENNHDLDIDSLVVAEAYVGKSIVMKRFHVRGRGRASRIERPFSHLTIIVREVIEKVEVA.

This sequence belongs to the universal ribosomal protein uL22 family. As to quaternary structure, part of the 50S ribosomal subunit.

Its function is as follows. This protein binds specifically to 23S rRNA; its binding is stimulated by other ribosomal proteins, e.g. L4, L17, and L20. It is important during the early stages of 50S assembly. It makes multiple contacts with different domains of the 23S rRNA in the assembled 50S subunit and ribosome. The globular domain of the protein is located near the polypeptide exit tunnel on the outside of the subunit, while an extended beta-hairpin is found that lines the wall of the exit tunnel in the center of the 70S ribosome. This Bartonella henselae (strain ATCC 49882 / DSM 28221 / CCUG 30454 / Houston 1) (Rochalimaea henselae) protein is Large ribosomal subunit protein uL22.